The following is a 1244-amino-acid chain: Superkiller complex protein 2 (1244 aa).

The disordered stretch occupies residues 218–249 (LDLSGGDEDEGEAAGGPRGDNASPSPSGTPLV). Residues Ser242 and Ser253 each carry the phosphoserine modification. Residues 316–472 (ILHLEQHDSV…WIGRLKRRQI (157 aa)) enclose the Helicase ATP-binding domain. 329-336 (AHTSAGKT) is a binding site for ATP. Positions 420–423 (DEVH) match the DEVH box motif. The Helicase C-terminal domain maps to 582–752 (GLTSLDLTTS…LTYTMILNLL (171 aa)).

This sequence belongs to the helicase family. SKI2 subfamily. In terms of assembly, component of the SKI complex which consists of SKIC2, SKIC3 and SKIC8. Interacts with HBS1L isoform 2.

Its subcellular location is the nucleus. The protein resides in the cytoplasm. It carries out the reaction ATP + H2O = ADP + phosphate + H(+). In terms of biological role, helicase component of the SKI complex, a multiprotein complex that assists the RNA-degrading exosome during the mRNA decay and quality-control pathways. The SKI complex catalyzes mRNA extraction from 80S ribosomal complexes in the 3'-5' direction and channels mRNA to the cytosolic exosome for degradation. SKI-mediated extraction of mRNA from stalled ribosomes allow binding of the Pelota-HBS1L complex and subsequent ribosome disassembly by ABCE1 for ribosome recycling. In the nucleus, the SKI complex associates with transcriptionally active genes in a manner dependent on PAF1 complex (PAF1C). The protein is Superkiller complex protein 2 of Mus musculus (Mouse).